A 238-amino-acid chain; its full sequence is Chloride intracellular channel exl-1 (238 aa).

The protein belongs to the chloride channel CLIC family. As to expression, expressed in the intestine, neurons and muscles.

It localises to the cytoplasm. It is found in the membrane. The protein localises to the lysosome membrane. The protein resides in the golgi apparatus membrane. Its function is as follows. Probable chloride channel. The chain is Chloride intracellular channel exl-1 (exl-1) from Caenorhabditis elegans.